Here is a 200-residue protein sequence, read N- to C-terminus: Small ribosomal subunit protein uS4 (200 aa).

Residues 92–155 enclose the S4 RNA-binding domain; it reads SRLDAVVYSL…QNLDIIKESV (64 aa).

It belongs to the universal ribosomal protein uS4 family. In terms of assembly, part of the 30S ribosomal subunit. Contacts protein S5. The interaction surface between S4 and S5 is involved in control of translational fidelity.

One of the primary rRNA binding proteins, it binds directly to 16S rRNA where it nucleates assembly of the body of the 30S subunit. In terms of biological role, with S5 and S12 plays an important role in translational accuracy. The polypeptide is Small ribosomal subunit protein uS4 (Staphylococcus epidermidis (strain ATCC 35984 / DSM 28319 / BCRC 17069 / CCUG 31568 / BM 3577 / RP62A)).